Reading from the N-terminus, the 323-residue chain is Aldo-keto reductase family 1 member C18 (323 aa).

Residues 20 to 24 and Asp-50 each bind NADP(+); that span reads GFGTY. Tyr-55 serves as the catalytic Proton donor. Position 117 (His-117) interacts with substrate. Residues 166–167, Gln-190, 216–221, and 270–280 each bind NADP(+); these read SN, YGALGT, and KSFNEERIREN.

The protein belongs to the aldo/keto reductase family. As to quaternary structure, monomer.

It localises to the cytoplasm. It carries out the reaction (17R,20S)-17,20-dihydroxypregn-4-en-3-one + NADP(+) = 17alpha-hydroxyprogesterone + NADPH + H(+). It catalyses the reaction (17R,20S)-17,20-dihydroxypregn-4-en-3-one + NAD(+) = 17alpha-hydroxyprogesterone + NADH + H(+). Catalyzes the conversion of progesterone into 20-alpha-dihydroprogesterone (20 alpha-OHP). The chain is Aldo-keto reductase family 1 member C18 (Akr1c18) from Mus musculus (Mouse).